The chain runs to 427 residues: 3-phosphoshikimate 1-carboxyvinyltransferase (427 aa).

3-phosphoshikimate-binding residues include Lys22, Ser23, and Arg27. Lys22 provides a ligand contact to phosphoenolpyruvate. Phosphoenolpyruvate is bound by residues Gly96 and Arg124. 7 residues coordinate 3-phosphoshikimate: Ser169, Ser170, Gln171, Ser197, Asp313, Asn336, and Lys340. Phosphoenolpyruvate is bound at residue Gln171. The Proton acceptor role is filled by Asp313. The phosphoenolpyruvate site is built by Arg344, Arg386, and Lys411.

Belongs to the EPSP synthase family. In terms of assembly, monomer.

The protein localises to the cytoplasm. It catalyses the reaction 3-phosphoshikimate + phosphoenolpyruvate = 5-O-(1-carboxyvinyl)-3-phosphoshikimate + phosphate. It participates in metabolic intermediate biosynthesis; chorismate biosynthesis; chorismate from D-erythrose 4-phosphate and phosphoenolpyruvate: step 6/7. Its function is as follows. Catalyzes the transfer of the enolpyruvyl moiety of phosphoenolpyruvate (PEP) to the 5-hydroxyl of shikimate-3-phosphate (S3P) to produce enolpyruvyl shikimate-3-phosphate and inorganic phosphate. This is 3-phosphoshikimate 1-carboxyvinyltransferase from Salmonella heidelberg (strain SL476).